The chain runs to 192 residues: Probable cobalt-precorrin-6B C(15)-methyltransferase (decarboxylating) (192 aa).

Residues T20, G44 to G48, E68, and A96 contribute to the S-adenosyl-L-methionine site.

Belongs to the methyltransferase superfamily. Archaeal-type CbiT family.

The enzyme catalyses Co-precorrin-6B + S-adenosyl-L-methionine = Co-precorrin-7 + S-adenosyl-L-homocysteine + CO2. Its pathway is cofactor biosynthesis; adenosylcobalamin biosynthesis; cob(II)yrinate a,c-diamide from sirohydrochlorin (anaerobic route): step 8/10. In terms of biological role, catalyzes the methylation of C-15 in cobalt-precorrin-6B followed by the decarboxylation of C-12 to form cobalt-precorrin-7. This Sulfolobus acidocaldarius (strain ATCC 33909 / DSM 639 / JCM 8929 / NBRC 15157 / NCIMB 11770) protein is Probable cobalt-precorrin-6B C(15)-methyltransferase (decarboxylating).